The primary structure comprises 473 residues: Dynein axonemal assembly factor 11 (473 aa).

LRR repeat units follow at residues 22 to 43, 45 to 66, 67 to 88, and 89 to 110; these read SLEE…DKWC, DLKI…SKLK, KLEY…EGCE, and WLTK…KTLT. The LRRCT domain maps to 123-161; sequence NPCADFDGYRQFVVVTLQQLKWLDGKEIERSERIQALQN. Positions 153–205 form a coiled coil; that stretch reads SERIQALQNYTSVEQQIREQEKAYCLRRAKEKEEAQRKLEEENESEDKKKSST. 2 stretches are compositionally biased toward basic and acidic residues: residues 188–202 and 273–283; these read QRKL…DKKK and EKQRKAQDKLS. Disordered stretches follow at residues 188–244, 273–292, and 387–473; these read QRKL…TKES, EKQR…AKPP, and VGEM…PPLI. The CS domain maps to 305 to 402; the sequence is VNEAKLDFSL…GGQRTPTSVK (98 aa). Residues 397-408 show a composition bias toward low complexity; it reads TPTSVKTTSTSS. Basic and acidic residues predominate over residues 417-431; sequence KQIERLEVDPSKHSC. Positions 456-467 are enriched in acidic residues; that stretch reads PSEEDPDFEDNP.

The protein belongs to the tilB family. As to quaternary structure, interacts (via CS domain) with ZMYND10 (via C-terminus). Mainly expressed in cells with motile cilia. Expressed in epithelial cells of the trachea, testis and ependymal cells of the cerebral ventricles. In testis, abundant expression in late prophase of meiosis I with a dramatic decrease after the first meiotic division (at protein level).

The protein resides in the cytoplasm. The protein localises to the cell projection. It is found in the cilium. It localises to the dynein axonemal particle. Its subcellular location is the flagellum. Involved in dynein arm assembly, is important for expression and transporting outer dynein arm (ODA) proteins from the cytoplasm to the cilia. Acts as a crucial component in the formation and motility of spermatozoal flagella. This chain is Dynein axonemal assembly factor 11 (Dnaaf11), found in Mus musculus (Mouse).